The chain runs to 505 residues: Lysine--tRNA ligase (505 aa).

The Mg(2+) site is built by Glu415 and Glu422.

This sequence belongs to the class-II aminoacyl-tRNA synthetase family. Homodimer. It depends on Mg(2+) as a cofactor.

It localises to the cytoplasm. It carries out the reaction tRNA(Lys) + L-lysine + ATP = L-lysyl-tRNA(Lys) + AMP + diphosphate. This chain is Lysine--tRNA ligase, found in Vibrio parahaemolyticus serotype O3:K6 (strain RIMD 2210633).